We begin with the raw amino-acid sequence, 120 residues long: UPF0231 protein KPN78578_01240 (120 aa).

It belongs to the UPF0231 family.

In Klebsiella pneumoniae subsp. pneumoniae (strain ATCC 700721 / MGH 78578), this protein is UPF0231 protein KPN78578_01240.